The sequence spans 276 residues: Large ribosomal subunit protein uL2 (276 aa).

Positions 223-276 (GVAMNPVDHPHGGGEGRGKGHHPTSPWGLPTKGYKTRRGKRPSDKFIVRRRNEV) are disordered. 2 stretches are compositionally biased toward basic and acidic residues: residues 230-240 (DHPHGGGEGRG) and 263-276 (RPSD…RNEV).

It belongs to the universal ribosomal protein uL2 family. As to quaternary structure, part of the 50S ribosomal subunit. Forms a bridge to the 30S subunit in the 70S ribosome.

One of the primary rRNA binding proteins. Required for association of the 30S and 50S subunits to form the 70S ribosome, for tRNA binding and peptide bond formation. It has been suggested to have peptidyltransferase activity; this is somewhat controversial. Makes several contacts with the 16S rRNA in the 70S ribosome. This chain is Large ribosomal subunit protein uL2, found in Thermotoga neapolitana (strain ATCC 49049 / DSM 4359 / NBRC 107923 / NS-E).